The primary structure comprises 139 residues: MGKLNKTEREWQRELSPEEYRITRQKGTEPAFTGQYWNTKQSGTYVCRCCGTELFSSISKYDSGCGWPSFYKPINTTAIEEHDDFSHGMVRTEIVCHHCDAHLGHVFEDGPQPTGLRYCVNSASLQLKTDEKNDEETYP.

The MsrB domain occupies 8–130; it reads EREWQRELSP…NSASLQLKTD (123 aa). C47, C50, C96, and C99 together coordinate Zn(2+). C119 acts as the Nucleophile in catalysis.

It belongs to the MsrB Met sulfoxide reductase family. Requires Zn(2+) as cofactor.

The catalysed reaction is L-methionyl-[protein] + [thioredoxin]-disulfide + H2O = L-methionyl-(R)-S-oxide-[protein] + [thioredoxin]-dithiol. This chain is Peptide methionine sulfoxide reductase MsrB, found in Acinetobacter baylyi (strain ATCC 33305 / BD413 / ADP1).